Consider the following 256-residue polypeptide: 5-oxoprolinase subunit A 3 (256 aa).

The protein belongs to the LamB/PxpA family. As to quaternary structure, forms a complex composed of PxpA, PxpB and PxpC.

It carries out the reaction 5-oxo-L-proline + ATP + 2 H2O = L-glutamate + ADP + phosphate + H(+). In terms of biological role, catalyzes the cleavage of 5-oxoproline to form L-glutamate coupled to the hydrolysis of ATP to ADP and inorganic phosphate. The protein is 5-oxoprolinase subunit A 3 of Pseudomonas syringae pv. tomato (strain ATCC BAA-871 / DC3000).